The chain runs to 426 residues: DNA primase DnaG (426 aa).

Residues 171-245 (DTVILVEGRA…KVDFVARAPP (75 aa)) enclose the Toprim domain. Mg(2+) contacts are provided by Glu177, Asp219, and Asp221. The tract at residues 407–426 (KSEENIQESVSTGESAQTSP) is disordered. Over residues 413–426 (QESVSTGESAQTSP) the composition is skewed to polar residues.

It belongs to the archaeal DnaG primase family. Forms a ternary complex with MCM helicase and DNA. Component of the archaeal exosome complex. Mg(2+) serves as cofactor.

It catalyses the reaction ssDNA + n NTP = ssDNA/pppN(pN)n-1 hybrid + (n-1) diphosphate.. RNA polymerase that catalyzes the synthesis of short RNA molecules used as primers for DNA polymerase during DNA replication. Also part of the exosome, which is a complex involved in RNA degradation. Acts as a poly(A)-binding protein that enhances the interaction between heteromeric, adenine-rich transcripts and the exosome. The polypeptide is DNA primase DnaG (Thermofilum pendens (strain DSM 2475 / Hrk 5)).